The primary structure comprises 142 residues: Putative mating-type transcription factor (142 aa).

The protein resides in the nucleus. This Eremothecium gossypii (strain ATCC 10895 / CBS 109.51 / FGSC 9923 / NRRL Y-1056) (Yeast) protein is Putative mating-type transcription factor.